The following is a 232-amino-acid chain: MLTSHFPLSFAGHRLHIVDFDASSFHEHDLLWLPHHDRLRSAGRKRKAEHLAGRIAAVHALRRWASGVPGIGDKRQPLWPDDLFGSISHCASTALAVISRQRVGVDIEKIMSQHTATELAVIIDSDEPQILQASSLPFPLALTLAFSAKESVYKAFSDRVSLPGFDSAKVTSLTATHISLHLLPAFAATMAERTVRTEWFQRGNSVITLVSALTRWPHDRSAPASILSAIPR.

Residues D106, E108, and E150 each contribute to the Mg(2+) site.

This sequence belongs to the P-Pant transferase superfamily. EntD family. EntB, EntD, EntE, and EntF form a multienzyme complex called enterobactin synthase. Mg(2+) serves as cofactor.

It localises to the membrane. It carries out the reaction apo-[aryl-carrier protein] + CoA = holo-[aryl-carrier protein] + adenosine 3',5'-bisphosphate + H(+). The catalysed reaction is apo-[peptidyl-carrier protein] + CoA = holo-[peptidyl-carrier protein] + adenosine 3',5'-bisphosphate + H(+). The protein operates within siderophore biosynthesis; enterobactin biosynthesis. In terms of biological role, involved in the biosynthesis of the siderophore enterobactin (enterochelin), which is a macrocyclic trimeric lactone of N-(2,3-dihydroxybenzoyl)-serine. The serine trilactone serves as a scaffolding for the three catechol functionalities that provide hexadentate coordination for the tightly ligated iron(2+) atoms. Plays an essential role in the assembly of the enterobactin by catalyzing the transfer of the 4'-phosphopantetheine (Ppant) moiety from coenzyme A to the apo-domains of both EntB (ArCP domain) and EntF (PCP domain) to yield their holo-forms which make them competent for the activation of 2,3-dihydroxybenzoate (DHB) and L-serine, respectively. The sequence is that of Enterobactin synthase component D from Salmonella austin.